We begin with the raw amino-acid sequence, 187 residues long: 1,6-anhydro-N-acetylmuramyl-L-alanine amidase AmpD (187 aa).

One can recognise an N-acetylmuramoyl-L-alanine amidase domain in the interval 29–167 (SLLVVHNISL…TPDRKTDPGP (139 aa)). Position 34 (His-34) interacts with Zn(2+). Glu-116 (proton acceptor) is an active-site residue. Zn(2+)-binding residues include His-154 and Asp-164.

Belongs to the N-acetylmuramoyl-L-alanine amidase 2 family. The cofactor is Zn(2+).

The protein localises to the cytoplasm. The catalysed reaction is Hydrolyzes the link between N-acetylmuramoyl residues and L-amino acid residues in certain cell-wall glycopeptides.. Functionally, involved in cell wall peptidoglycan recycling. Specifically cleaves the amide bond between the lactyl group of N-acetylmuramic acid and the alpha-amino group of the L-alanine in degradation products containing an anhydro N-acetylmuramyl moiety. In Salmonella typhimurium (strain LT2 / SGSC1412 / ATCC 700720), this protein is 1,6-anhydro-N-acetylmuramyl-L-alanine amidase AmpD (ampD).